Reading from the N-terminus, the 372-residue chain is uncharacterized protein (372 aa).

The PNPLA domain occupies 38 to 270 (FFIEGGGTKG…ANNIPLDYLI (233 aa)). A GXGXXG motif is present at residues 42-47 (GGGTKG). Residues 74-78 (GTSVG) carry the GXSXG motif. Ser76 acts as the Nucleophile in catalysis. Asp257 acts as the Proton acceptor in catalysis. Residues 257–259 (DGG) carry the DGA/G motif.

Its function is as follows. Probable lipid hydrolase. This is an uncharacterized protein from Acanthamoeba polyphaga (Amoeba).